A 329-amino-acid chain; its full sequence is Capsular polysaccharide phosphotransferase WcwK (329 aa).

The protein belongs to the stealth family.

This chain is Capsular polysaccharide phosphotransferase WcwK (wcwK), found in Streptococcus pneumoniae.